The following is a 377-amino-acid chain: Guanine nucleotide exchange factor for Rab-3A (377 aa).

The segment at 23-57 (WKNLGPSKGNRKSPGGLVEASASWEEAGGEEHPAA) is disordered. Positions 77–128 (SEFLKEELYKAQKELKLKDEECERLCKVRAQLEQELEELTASLFEEAHKMVR) form a coiled coil. The interval 167–198 (PASPNRELHPQLLSPTKAGPRKGHSRQKSTSS) is disordered. Ser-169 and Ser-180 each carry phosphoserine.

This sequence belongs to the SEC2 family. In terms of assembly, interacts with RAB3A and IHPK1 through the coiled-coil domain. This interaction is competitive. IHPK1 kinase activity is not required for this interaction. As to expression, selectively localized to the brain (at protein level).

Functionally, guanine nucleotide exchange factor (GEF) which may activate RAB3A, a GTPase that regulates synaptic vesicle exocytosis. Promotes the exchange of GDP to GTP, converting inactive GDP-bound Rab proteins into their active GTP-bound form. May also activate RAB8A and RAB8B. This is Guanine nucleotide exchange factor for Rab-3A (Rab3il1) from Rattus norvegicus (Rat).